We begin with the raw amino-acid sequence, 233 residues long: Purine nucleoside phosphorylase DeoD-type (233 aa).

H4 contacts a purine D-ribonucleoside. Phosphate-binding positions include G20, R24, R43, and 87 to 90 (RIGT). Residues 179 to 181 (EME) and 203 to 204 (SD) each bind a purine D-ribonucleoside. Catalysis depends on D204, which acts as the Proton donor.

It belongs to the PNP/UDP phosphorylase family. Homohexamer; trimer of homodimers.

The enzyme catalyses a purine D-ribonucleoside + phosphate = a purine nucleobase + alpha-D-ribose 1-phosphate. The catalysed reaction is a purine 2'-deoxy-D-ribonucleoside + phosphate = a purine nucleobase + 2-deoxy-alpha-D-ribose 1-phosphate. In terms of biological role, catalyzes the reversible phosphorolytic breakdown of the N-glycosidic bond in the beta-(deoxy)ribonucleoside molecules, with the formation of the corresponding free purine bases and pentose-1-phosphate. This chain is Purine nucleoside phosphorylase DeoD-type, found in Helicobacter pylori (strain P12).